The following is a 221-amino-acid chain: HP1-HOAP-interacting protein (221 aa).

The interval Asn-69 to Tyr-113 is disordered. Positions Val-86–Ser-103 are enriched in low complexity.

Component of the HipHop-HOAP telomere-capping complex, composed of at least HipHop and cav/HOAP, and may include Su(var)205/HP1; HipHop and cav/HOAP, but not Su(var)205, are interdependent for their protein stability. Interacts (via N-terminus) with cav/HOAP and Su(var)205/HP1. The HipHop-HOAP complex recruits the MTV complex, consisting of moi/modigliani, tea and ver/verrocchio, to telomeres to form the terminin telomere-capping complex.

It is found in the nucleus. Its subcellular location is the chromosome. It localises to the telomere. In terms of biological role, part of the HipHop-HOAP complex that recruits the MTV complex to form the terminin telomere-capping complex, which binds to chromosome ends in a sequence-independent manner and prevents telomere fusion. The chain is HP1-HOAP-interacting protein from Drosophila melanogaster (Fruit fly).